The sequence spans 452 residues: Cysteine--tRNA ligase (452 aa).

A Zn(2+)-binding site is contributed by Cys-35. The 'HIGH' region signature appears at 37 to 47 (PTVYDRAHLGN). Positions 215, 240, and 244 each coordinate Zn(2+). The short motif at 273 to 277 (KMSKS) is the 'KMSKS' region element. Lys-276 provides a ligand contact to ATP.

This sequence belongs to the class-I aminoacyl-tRNA synthetase family. Monomer. Zn(2+) serves as cofactor.

It localises to the cytoplasm. It catalyses the reaction tRNA(Cys) + L-cysteine + ATP = L-cysteinyl-tRNA(Cys) + AMP + diphosphate. The polypeptide is Cysteine--tRNA ligase (Gluconobacter oxydans (strain 621H) (Gluconobacter suboxydans)).